Here is a 101-residue protein sequence, read N- to C-terminus: MAKLSLIQREEKREKLVAKYAKKYAELKATIDDQSKSEEERYAARLALQQLPRNAYPTRLRARCGITGRPRGTFRKFGLGRTKIRELAFRGDIPGVVKASW.

This sequence belongs to the universal ribosomal protein uS14 family. As to quaternary structure, part of the 30S ribosomal subunit. Contacts proteins S3 and S10.

In terms of biological role, binds 16S rRNA, required for the assembly of 30S particles and may also be responsible for determining the conformation of the 16S rRNA at the A site. In Leptothrix cholodnii (strain ATCC 51168 / LMG 8142 / SP-6) (Leptothrix discophora (strain SP-6)), this protein is Small ribosomal subunit protein uS14.